The primary structure comprises 155 residues: SsrA-binding protein (155 aa).

It belongs to the SmpB family.

The protein localises to the cytoplasm. Required for rescue of stalled ribosomes mediated by trans-translation. Binds to transfer-messenger RNA (tmRNA), required for stable association of tmRNA with ribosomes. tmRNA and SmpB together mimic tRNA shape, replacing the anticodon stem-loop with SmpB. tmRNA is encoded by the ssrA gene; the 2 termini fold to resemble tRNA(Ala) and it encodes a 'tag peptide', a short internal open reading frame. During trans-translation Ala-aminoacylated tmRNA acts like a tRNA, entering the A-site of stalled ribosomes, displacing the stalled mRNA. The ribosome then switches to translate the ORF on the tmRNA; the nascent peptide is terminated with the 'tag peptide' encoded by the tmRNA and targeted for degradation. The ribosome is freed to recommence translation, which seems to be the essential function of trans-translation. This Clostridium acetobutylicum (strain ATCC 824 / DSM 792 / JCM 1419 / IAM 19013 / LMG 5710 / NBRC 13948 / NRRL B-527 / VKM B-1787 / 2291 / W) protein is SsrA-binding protein.